The chain runs to 427 residues: Histidine--tRNA ligase (427 aa).

This sequence belongs to the class-II aminoacyl-tRNA synthetase family. As to quaternary structure, homodimer.

Its subcellular location is the cytoplasm. The enzyme catalyses tRNA(His) + L-histidine + ATP = L-histidyl-tRNA(His) + AMP + diphosphate + H(+). The chain is Histidine--tRNA ligase (hisS) from Mycobacterium leprae (strain TN).